Consider the following 260-residue polypeptide: Hydroxyethylthiazole kinase 1 (260 aa).

Met-39 lines the substrate pocket. ATP-binding residues include Arg-115 and Thr-160. Gly-187 lines the substrate pocket.

The protein belongs to the Thz kinase family. Requires Mg(2+) as cofactor.

It carries out the reaction 5-(2-hydroxyethyl)-4-methylthiazole + ATP = 4-methyl-5-(2-phosphooxyethyl)-thiazole + ADP + H(+). It participates in cofactor biosynthesis; thiamine diphosphate biosynthesis; 4-methyl-5-(2-phosphoethyl)-thiazole from 5-(2-hydroxyethyl)-4-methylthiazole: step 1/1. In terms of biological role, catalyzes the phosphorylation of the hydroxyl group of 4-methyl-5-beta-hydroxyethylthiazole (THZ). The chain is Hydroxyethylthiazole kinase 1 from Streptococcus pneumoniae serotype 2 (strain D39 / NCTC 7466).